Consider the following 274-residue polypeptide: NH(3)-dependent NAD(+) synthetase (274 aa).

46 to 53 serves as a coordination point for ATP; that stretch reads GISGGQDS. Position 52 (Asp52) interacts with Mg(2+). Arg140 lines the deamido-NAD(+) pocket. Position 160 (Thr160) interacts with ATP. Residue Glu165 participates in Mg(2+) binding. Deamido-NAD(+) is bound by residues Lys173 and Asp180. Lys189 and Thr211 together coordinate ATP. Residue 260-261 coordinates deamido-NAD(+); that stretch reads HK.

The protein belongs to the NAD synthetase family. As to quaternary structure, homodimer.

The enzyme catalyses deamido-NAD(+) + NH4(+) + ATP = AMP + diphosphate + NAD(+) + H(+). The protein operates within cofactor biosynthesis; NAD(+) biosynthesis; NAD(+) from deamido-NAD(+) (ammonia route): step 1/1. In terms of biological role, catalyzes the ATP-dependent amidation of deamido-NAD to form NAD. Uses ammonia as a nitrogen source. In Streptococcus gordonii (strain Challis / ATCC 35105 / BCRC 15272 / CH1 / DL1 / V288), this protein is NH(3)-dependent NAD(+) synthetase.